Here is a 704-residue protein sequence, read N- to C-terminus: SH3KBP1-binding protein 1 (704 aa).

N-acetylalanine is present on alanine 2. A BTB domain is found at 19-88; it reads EVIHLNVGGK…LRTKELDPRG (70 aa). The tract at residues 146–165 is disordered; the sequence is VGPQQIGGRPAPVRRSNTMP. Threonine 163 bears the Phosphothreonine mark. WD repeat units lie at residues 233–280, 283–322, 324–359, 428–466, and 548–586; these read RLDW…GGSE, VFHL…WQVQ, VQPI…LRMK, VHRS…GMIS, and LECE…DGLG. A disordered region spans residues 609–704; the sequence is PLASSRGSFP…LKKTLNETSF (96 aa). Over residues 612–631 the composition is skewed to low complexity; the sequence is SSRGSFPSPSPRTSLTSLHS. Residues 618-623 carry the PXXXPR motif; that stretch reads PSPSPR. 2 positions are modified to phosphoserine: serine 644 and serine 646. The PXXXPR signature appears at 678 to 683; that stretch reads PTPAPR. Threonine 693 bears the Phosphothreonine mark.

Belongs to the KCTD3 family. As to quaternary structure, monomer. Interacts with CUL3; interaction is direct and forms a 5:5 heterodecamer. Interacts (via PXXXPR motifs) with SH3KBP1 (via SH3 domains). Directly interacts with cathepsin B/CTSB.

The protein resides in the lysosome. Inhibits CBL-SH3KBP1 complex mediated down-regulation of EGFR signaling by sequestration of SH3KBP1. Binds to SH3KBP1 and prevents its interaction with CBL and inhibits translocation of SH3KBP1 to EGFR containing vesicles upon EGF stimulation. The protein is SH3KBP1-binding protein 1 (Shkbp1) of Mus musculus (Mouse).